A 269-amino-acid chain; its full sequence is Zinc transporter ZupT (269 aa).

8 consecutive transmembrane segments (helical) span residues 5–25 (VLLA…GSLI), 38–58 (SLAL…EIFV), 75–95 (WMTI…DKFI), 125–145 (MGIF…IATF), 158–178 (IAIA…VPIF), 190–210 (LSFL…LLLM), 212–232 (FLTD…MVFI), and 249–269 (LSMY…VLLV). The Fe(2+) site is built by N137 and E140. Zn(2+)-binding residues include E140 and H165. The Fe(2+) site is built by N166, E169, and E198. Position 169 (E169) interacts with Zn(2+).

It belongs to the ZIP transporter (TC 2.A.5) family. ZupT subfamily.

Its subcellular location is the cell membrane. It catalyses the reaction Zn(2+)(in) = Zn(2+)(out). Its function is as follows. Mediates zinc uptake. May also transport other divalent cations. This Lysinibacillus sphaericus (strain C3-41) protein is Zinc transporter ZupT.